A 96-amino-acid polypeptide reads, in one-letter code: Co-chaperonin GroES 2 (96 aa).

The protein belongs to the GroES chaperonin family. As to quaternary structure, heptamer of 7 subunits arranged in a ring. Interacts with the chaperonin GroEL.

The protein localises to the cytoplasm. Its function is as follows. Together with the chaperonin GroEL, plays an essential role in assisting protein folding. The GroEL-GroES system forms a nano-cage that allows encapsulation of the non-native substrate proteins and provides a physical environment optimized to promote and accelerate protein folding. GroES binds to the apical surface of the GroEL ring, thereby capping the opening of the GroEL channel. This chain is Co-chaperonin GroES 2, found in Vibrio vulnificus (strain CMCP6).